Consider the following 319-residue polypeptide: tRNA dimethylallyltransferase (319 aa).

16–23 is a binding site for ATP; it reads GPTASGKS. 18-23 contributes to the substrate binding site; the sequence is TASGKS. Residues 46-49 are interaction with substrate tRNA; it reads DSMV.

The protein belongs to the IPP transferase family. In terms of assembly, monomer. The cofactor is Mg(2+).

The catalysed reaction is adenosine(37) in tRNA + dimethylallyl diphosphate = N(6)-dimethylallyladenosine(37) in tRNA + diphosphate. Catalyzes the transfer of a dimethylallyl group onto the adenine at position 37 in tRNAs that read codons beginning with uridine, leading to the formation of N6-(dimethylallyl)adenosine (i(6)A). This chain is tRNA dimethylallyltransferase, found in Cutibacterium acnes (strain DSM 16379 / KPA171202) (Propionibacterium acnes).